The following is a 147-amino-acid chain: Large ribosomal subunit protein uL11 (147 aa).

The protein belongs to the universal ribosomal protein uL11 family. In terms of assembly, part of the ribosomal stalk of the 50S ribosomal subunit. Interacts with L10 and the large rRNA to form the base of the stalk. L10 forms an elongated spine to which L12 dimers bind in a sequential fashion forming a multimeric L10(L12)X complex. Post-translationally, one or more lysine residues are methylated.

Its function is as follows. Forms part of the ribosomal stalk which helps the ribosome interact with GTP-bound translation factors. This chain is Large ribosomal subunit protein uL11, found in Phocaeicola vulgatus (strain ATCC 8482 / DSM 1447 / JCM 5826 / CCUG 4940 / NBRC 14291 / NCTC 11154) (Bacteroides vulgatus).